The following is a 301-amino-acid chain: uncharacterized protein (301 aa).

Residues Ser-44 and Tyr-107 each act as charge relay system in the active site. The Proton donor role is filled by Tyr-133. Lys-162 functions as the Schiff-base intermediate with substrate in the catalytic mechanism.

Belongs to the DapA family. As to quaternary structure, homotetramer.

The protein localises to the cytoplasm. This is an uncharacterized protein from Pyrobaculum neutrophilum (strain DSM 2338 / JCM 9278 / NBRC 100436 / V24Sta) (Thermoproteus neutrophilus).